We begin with the raw amino-acid sequence, 145 residues long: Granulysin (145 aa).

A signal peptide spans 1 to 22 (MATWALLLLAAMLLGNPGLVFS). A Saposin B-type domain is found at 62–142 (LGRDYRTCLT…EDLRLCIPST (81 aa)). 2 cysteine pairs are disulfide-bonded: C69-C132 and C96-C107.

In terms of processing, a 9 kDa form is produced by proteolytic processing of a 15 kDa protein. In terms of tissue distribution, expressed in natural killer and T-cells.

The protein resides in the secreted. Its function is as follows. Antimicrobial protein that kills intracellular pathogens. Active against a broad range of microbes, including Gram-positive and Gram-negative bacteria, fungi, and parasites. Kills Mycobacterium tuberculosis. This chain is Granulysin (GNLY), found in Homo sapiens (Human).